The sequence spans 133 residues: Small ribosomal subunit protein uS15 (133 aa).

The protein belongs to the universal ribosomal protein uS15 family. As to quaternary structure, part of the 30S ribosomal subunit.

The chain is Small ribosomal subunit protein uS15 from Methanosphaera stadtmanae (strain ATCC 43021 / DSM 3091 / JCM 11832 / MCB-3).